Consider the following 214-residue polypeptide: Probable transaldolase (214 aa).

Lys-83 acts as the Schiff-base intermediate with substrate in catalysis.

The protein belongs to the transaldolase family. Type 3B subfamily.

The protein localises to the cytoplasm. The catalysed reaction is D-sedoheptulose 7-phosphate + D-glyceraldehyde 3-phosphate = D-erythrose 4-phosphate + beta-D-fructose 6-phosphate. It functions in the pathway carbohydrate degradation; pentose phosphate pathway; D-glyceraldehyde 3-phosphate and beta-D-fructose 6-phosphate from D-ribose 5-phosphate and D-xylulose 5-phosphate (non-oxidative stage): step 2/3. Its function is as follows. Transaldolase is important for the balance of metabolites in the pentose-phosphate pathway. This chain is Probable transaldolase, found in Alkaliphilus metalliredigens (strain QYMF).